A 414-amino-acid polypeptide reads, in one-letter code: tRNA N6-adenosine threonylcarbamoyltransferase, mitochondrial (414 aa).

Residues 1–29 (MLMLSKTAGAIPRPPRSNVRGFIRRFNVQ) constitute a mitochondrion transit peptide. Lys74 and Lys140 each carry N6-acetyllysine. A divalent metal cation contacts are provided by His147 and His151. Substrate contacts are provided by residues 169–173 (LISGG) and Asp202. Lys203 carries the post-translational modification N6-acetyllysine. Substrate contacts are provided by Gly222 and Glu226. 2 positions are modified to N6-acetyllysine: Lys230 and Lys299. Substrate-binding positions include 329–330 (SN) and Thr357. Asp358 serves as a coordination point for a divalent metal cation.

It belongs to the KAE1 / TsaD family. As to quaternary structure, monomer. The cofactor is a divalent metal cation.

It localises to the mitochondrion. The enzyme catalyses L-threonylcarbamoyladenylate + adenosine(37) in tRNA = N(6)-L-threonylcarbamoyladenosine(37) in tRNA + AMP + H(+). Functionally, required for the formation of a threonylcarbamoyl group on adenosine at position 37 (t(6)A37) in mitochondrial tRNAs that read codons beginning with adenine. Probably involved in the transfer of the threonylcarbamoyl moiety of threonylcarbamoyl-AMP (TC-AMP) to the N6 group of A37. Involved in mitochondrial genome maintenance. This chain is tRNA N6-adenosine threonylcarbamoyltransferase, mitochondrial, found in Rattus norvegicus (Rat).